The primary structure comprises 114 residues: Protein D2 (114 aa).

It belongs to the phosphatidylethanolamine-binding protein family.

The chain is Protein D2 (D2) from Onchocerca volvulus.